The chain runs to 682 residues: MCGIFAYMNYRVPRTRKEIFETLIKGLQRLEYRGYDSAGVAIDGNNHEVKERHIQLVKKRGKVKALDEELYKQDSMDLKVEFETHFGIAHTRWATHGVPSAVNSHPQRSDKGNEFVVIHNGIITNYKDLRKFLESKGYEFESETDTETIAKLIKYVFDNRETEDITFSTLVERVIQQLEGAFALVFKSVHYPGEAVATRRGSPLLIGVRSKYKLSTEQIPILYRTCTLENVKNICKTRMKRLDSSACLHAVGDKAVEFFFASDASAIIEHTNRVIFLEDDDIAAVADGKLSIHRVKRSASDDPSRAIQTLQMELQQIMKGNFSAFMQKEIFEQPESVFNTMRGRVNFETNTVLLGGLKDHLKEIRRCRRLIVIGCGTSYHAAVATRQVLEELTELPVMVELASDFLDRNTPVFRDDVCFFISQSGETADTLLALRYCKDRGALTVGVTNTVGSSISRETDCGVHINAGPEIGVASTKAYTSQFISLVMFGLMMSEDRISLQNRRQEIIRGLRSLPELIKEVLSLEEKIHDLALELYTQRSLLVMGRGYNYATCLEGALKIKEITYMHSEGILAGELKHGPLALIDKQMPVIMVIMKDPCFAKCQNALQQVTARQGRPIILCSKDDTESSKFAYKTIELPHTVDCLQGILSVIPLQLLSFHLAVLRGYDVDFPRNLAKSVTVE.

Catalysis depends on Cys2, which acts as the For GATase activity. The Glutamine amidotransferase type-2 domain maps to 2–288 (CGIFAYMNYR…DDDIAAVADG (287 aa)). Ser244 is modified (phosphoserine). 2 SIS domains span residues 360 to 499 (HLKE…DRIS) and 531 to 672 (LALE…VDFP). Substrate contacts are provided by residues 377 to 378 (TS), 422 to 424 (SQS), Thr427, and His578.

In terms of tissue distribution, highest levels of expression in heart, placenta, and spinal cord.

The enzyme catalyses D-fructose 6-phosphate + L-glutamine = D-glucosamine 6-phosphate + L-glutamate. The protein operates within nucleotide-sugar biosynthesis; UDP-N-acetyl-alpha-D-glucosamine biosynthesis; alpha-D-glucosamine 6-phosphate from D-fructose 6-phosphate: step 1/1. Its function is as follows. Controls the flux of glucose into the hexosamine pathway. Most likely involved in regulating the availability of precursors for N- and O-linked glycosylation of proteins. The chain is Glutamine--fructose-6-phosphate aminotransferase [isomerizing] 2 (GFPT2) from Homo sapiens (Human).